Consider the following 460-residue polypeptide: Serine--tRNA ligase (460 aa).

Residues 50 to 65 (DRNEVSSKIGELKQAG) are compositionally biased toward basic and acidic residues. 2 disordered regions span residues 50 to 71 (DRNEVSSKIGELKQAGDEDAAQ) and 109 to 129 (PDEDAPVGDSEAENVERRREG). Acidic residues predominate over residues 109 to 121 (PDEDAPVGDSEAE). 241-243 (TAE) provides a ligand contact to L-serine. ATP is bound by residues 272–274 (RRE) and valine 288. Glutamate 295 is an L-serine binding site. 368 to 371 (EVSS) lines the ATP pocket. Residue serine 404 participates in L-serine binding.

Belongs to the class-II aminoacyl-tRNA synthetase family. Type-1 seryl-tRNA synthetase subfamily. As to quaternary structure, homodimer. The tRNA molecule binds across the dimer.

The protein localises to the cytoplasm. The enzyme catalyses tRNA(Ser) + L-serine + ATP = L-seryl-tRNA(Ser) + AMP + diphosphate + H(+). It catalyses the reaction tRNA(Sec) + L-serine + ATP = L-seryl-tRNA(Sec) + AMP + diphosphate + H(+). It participates in aminoacyl-tRNA biosynthesis; selenocysteinyl-tRNA(Sec) biosynthesis; L-seryl-tRNA(Sec) from L-serine and tRNA(Sec): step 1/1. In terms of biological role, catalyzes the attachment of serine to tRNA(Ser). Is also able to aminoacylate tRNA(Sec) with serine, to form the misacylated tRNA L-seryl-tRNA(Sec), which will be further converted into selenocysteinyl-tRNA(Sec). This is Serine--tRNA ligase from Halobacterium salinarum (strain ATCC 29341 / DSM 671 / R1).